Reading from the N-terminus, the 930-residue chain is Eisosome protein 1 (930 aa).

Disordered stretches follow at residues 1–34 (MSLISAAADVNDASSTTSAGSVRSSAVYRKDGKP), 98–143 (TAVS…APKK), 516–544 (DNEISDSAAKHEEEEGKREELTKHKEEFD), and 637–930 (NNKS…KEVF). Composition is skewed to low complexity over residues 13 to 27 (ASSTTSAGSVRSSAV) and 98 to 129 (TAVSSRSRSSSVTSNATVVTTSSKSTNAAVKA). 2 stretches are compositionally biased toward basic and acidic residues: residues 523-542 (AAKHEEEEGKREELTKHKEE) and 676-691 (NSDELPVKDSAEKSSE). Over residues 703-715 (PAKASSPYPAKPS) the composition is skewed to low complexity. The segment covering 721–731 (LPKDFKPEVKP) has biased composition (basic and acidic residues). 2 stretches are compositionally biased toward low complexity: residues 740–755 (PQQGAAAGGEPASAKS) and 781–804 (PAAAATPVHPPATVKKAAPKKAAA). Composition is skewed to polar residues over residues 849 to 866 (NATTKSVSTLQKPTNSGI) and 883 to 894 (SGHSNHTRTSVY). Positions 898–908 (DNSDDEDELPD) are enriched in acidic residues. Residues 919-930 (ADKKGSLFKEVF) are compositionally biased toward basic and acidic residues.

It belongs to the EIS1 family.

The protein resides in the cytoplasmic granule. It localises to the cell membrane. In terms of biological role, required for normal formation of eisosomes, large cytoplasmic protein assemblies that localize to specialized domains on plasma membrane and mark the site of endocytosis. This chain is Eisosome protein 1 (EIS1), found in Lachancea thermotolerans (strain ATCC 56472 / CBS 6340 / NRRL Y-8284) (Yeast).